Consider the following 154-residue polypeptide: Myoglobin (154 aa).

A Globin domain is found at 2–148 (GLSDGEWQLV…FRNDMAAKYK (147 aa)). Serine 4 bears the Phosphoserine mark. Histidine 65 is a binding site for nitrite. O2 is bound at residue histidine 65. Threonine 68 carries the phosphothreonine modification. A heme b-binding site is contributed by histidine 94.

Belongs to the globin family. In terms of assembly, monomeric.

The protein localises to the cytoplasm. Its subcellular location is the sarcoplasm. The enzyme catalyses Fe(III)-heme b-[protein] + nitric oxide + H2O = Fe(II)-heme b-[protein] + nitrite + 2 H(+). It carries out the reaction H2O2 + AH2 = A + 2 H2O. In terms of biological role, monomeric heme protein which primary function is to store oxygen and facilitate its diffusion within muscle tissues. Reversibly binds oxygen through a pentacoordinated heme iron and enables its timely and efficient release as needed during periods of heightened demand. Depending on the oxidative conditions of tissues and cells, and in addition to its ability to bind oxygen, it also has a nitrite reductase activity whereby it regulates the production of bioactive nitric oxide. Under stress conditions, like hypoxia and anoxia, it also protects cells against reactive oxygen species thanks to its pseudoperoxidase activity. The protein is Myoglobin (MB) of Saimiri sciureus (Common squirrel monkey).